Consider the following 347-residue polypeptide: Quinolinate synthase (347 aa).

Residues His47 and Ser68 each contribute to the iminosuccinate site. Cys113 is a binding site for [4Fe-4S] cluster. Residues 139 to 141 and Ser156 each bind iminosuccinate; that span reads YAN. A [4Fe-4S] cluster-binding site is contributed by Cys200. Residues 226-228 and Thr243 each bind iminosuccinate; that span reads HPE. Cys297 is a [4Fe-4S] cluster binding site.

Belongs to the quinolinate synthase family. Type 1 subfamily. It depends on [4Fe-4S] cluster as a cofactor.

Its subcellular location is the cytoplasm. It carries out the reaction iminosuccinate + dihydroxyacetone phosphate = quinolinate + phosphate + 2 H2O + H(+). Its pathway is cofactor biosynthesis; NAD(+) biosynthesis; quinolinate from iminoaspartate: step 1/1. Catalyzes the condensation of iminoaspartate with dihydroxyacetone phosphate to form quinolinate. This chain is Quinolinate synthase, found in Salmonella choleraesuis (strain SC-B67).